The following is a 429-amino-acid chain: Serine hydroxymethyltransferase (429 aa).

Residues L128 and 132–134 (GHL) each bind (6S)-5,6,7,8-tetrahydrofolate. At K237 the chain carries N6-(pyridoxal phosphate)lysine.

Belongs to the SHMT family. As to quaternary structure, homodimer. It depends on pyridoxal 5'-phosphate as a cofactor.

It localises to the cytoplasm. The catalysed reaction is (6R)-5,10-methylene-5,6,7,8-tetrahydrofolate + glycine + H2O = (6S)-5,6,7,8-tetrahydrofolate + L-serine. The protein operates within one-carbon metabolism; tetrahydrofolate interconversion. Its pathway is amino-acid biosynthesis; glycine biosynthesis; glycine from L-serine: step 1/1. Catalyzes the reversible interconversion of serine and glycine with tetrahydrofolate (THF) serving as the one-carbon carrier. This reaction serves as the major source of one-carbon groups required for the biosynthesis of purines, thymidylate, methionine, and other important biomolecules. Also exhibits THF-independent aldolase activity toward beta-hydroxyamino acids, producing glycine and aldehydes, via a retro-aldol mechanism. The chain is Serine hydroxymethyltransferase from Caulobacter vibrioides (strain ATCC 19089 / CIP 103742 / CB 15) (Caulobacter crescentus).